The chain runs to 205 residues: Protein N-terminal glutamine amidohydrolase (205 aa).

Catalysis depends on residues Cys20, His74, and Asp90.

It belongs to the NTAQ1 family. Monomer.

It catalyses the reaction N-terminal L-glutaminyl-[protein] + H2O = N-terminal L-glutamyl-[protein] + NH4(+). Functionally, mediates the side-chain deamidation of N-terminal glutamine residues to glutamate, an important step in N-end rule pathway of protein degradation. Conversion of the resulting N-terminal glutamine to glutamate renders the protein susceptible to arginylation, polyubiquitination and degradation as specified by the N-end rule. Does not act on substrates with internal or C-terminal glutamine and does not act on non-glutamine residues in any position. This Drosophila mojavensis (Fruit fly) protein is Protein N-terminal glutamine amidohydrolase (tun).